A 366-amino-acid chain; its full sequence is tRNA/tmRNA (uracil-C(5))-methyltransferase (366 aa).

S-adenosyl-L-methionine is bound by residues Gln-190, Tyr-218, Asn-223, Glu-239, and Asp-299. Residue Cys-324 is the Nucleophile of the active site. Catalysis depends on Glu-358, which acts as the Proton acceptor.

Belongs to the class I-like SAM-binding methyltransferase superfamily. RNA M5U methyltransferase family. TrmA subfamily.

It carries out the reaction uridine(54) in tRNA + S-adenosyl-L-methionine = 5-methyluridine(54) in tRNA + S-adenosyl-L-homocysteine + H(+). The enzyme catalyses uridine(341) in tmRNA + S-adenosyl-L-methionine = 5-methyluridine(341) in tmRNA + S-adenosyl-L-homocysteine + H(+). Functionally, dual-specificity methyltransferase that catalyzes the formation of 5-methyluridine at position 54 (m5U54) in all tRNAs, and that of position 341 (m5U341) in tmRNA (transfer-mRNA). The chain is tRNA/tmRNA (uracil-C(5))-methyltransferase from Salmonella newport (strain SL254).